The following is a 134-amino-acid chain: Profilin-4 (134 aa).

The protein belongs to the profilin family. In terms of assembly, occurs in many kinds of cells as a complex with monomeric actin in a 1:1 ratio. Specifically expressed in mature and germinating pollen grains, and growing pollen tubes (at protein level).

It localises to the cytoplasm. The protein resides in the cytoskeleton. Binds to actin monomers and regulates the organization of the actin cytoskeleton. At high concentrations, profilin prevents the polymerization of actin, whereas it enhances it at low concentrations. At low concentrations, associates with the poly-proline motif of formins to enhance actin filament elongation rate. Acts redundantly with PRF5 to regulate apical actin polymerization at the tip of pollen tube and control polarized pollen tube growth. Functions probably by favoring formin-mediated actin polymerization at pollen tube tips. The sequence is that of Profilin-4 from Arabidopsis thaliana (Mouse-ear cress).